The sequence spans 135 residues: Mini-ribonuclease 3 (135 aa).

Aspartate 17 is a catalytic residue.

The protein belongs to the MrnC RNase family. As to quaternary structure, homodimer. The cofactor is Mg(2+).

The protein resides in the cytoplasm. Its function is as follows. Involved in correct processing of both the 5' and 3' ends of 23S rRNA precursor. Processes 30S rRNA precursor transcript even in absence of ribonuclease 3 (Rnc); Rnc processes 30S rRNA into smaller rRNA precursors. The chain is Mini-ribonuclease 3 from Bacillus cereus (strain ATCC 14579 / DSM 31 / CCUG 7414 / JCM 2152 / NBRC 15305 / NCIMB 9373 / NCTC 2599 / NRRL B-3711).